The primary structure comprises 1742 residues: NACHT and WD repeat domain-containing protein 2 (1742 aa).

LRR repeat units follow at residues 386–410 (FYEYKCESLNILHKYILPSKTGHIN), 677–698 (LEDVLALDNSVMNELNENTRPS), 724–747 (VKNVTLLVWANRHLQLIAQKLYLQ), 883–906 (YSQEKELKFLASTLRSIRNKVIAF), and 925–953 (LPKLRHLLLECDKDGPKYCSIVPLHSSMD). The NACHT domain occupies 410 to 737 (NPLVVYGGPC…TLLVWANRHL (328 aa)). 11 WD repeats span residues 963–1004 (LASS…LLRQ), 1007–1046 (TAQSVILGMKLSSDEKYLVVATTNNTLLIYDNVNSCLLSE), 1140–1179 (FSGGFVKFLLILDTAQEMVMVDSEGSLSVWNTEDISNPQL), 1229–1271 (RHNE…ASLQ), 1272–1311 (ESSGTIVKLVKSSHHNMLLSLSTSGVLSIWDIDIITAMSN), 1314–1353 (KTGKPIQSLVLPARGEIIYSLDGSDCVHKWNFSSGFIEAV), 1355–1394 (KHEGIVEHCVLTSTGDLMVTSDDKSSQYVWHTSSGENLFR), 1396–1434 (NGQRISQLLITHNDQFVVSLCEENASRVWRLATGHRVCN), 1476–1516 (EDGI…ICRR), 1522–1561 (NFLKNLEDFEISPNGKLGIISRGDENINVLDLHSGKLRVV), and 1614–1653 (SLYKTPTFLALSQRHLNIIVGFDDGSIGIYTVVDRVDAAL). A disordered region spans residues 1702–1721 (PITVSDSSESNEATPSKKHN). The segment covering 1703–1715 (ITVSDSSESNEAT) has biased composition (polar residues).

This chain is NACHT and WD repeat domain-containing protein 2 (Nwd2), found in Mus musculus (Mouse).